The primary structure comprises 356 residues: Leucoanthocyanidin dioxygenase (356 aa).

Substrate is bound by residues Y142 and K213. A Fe2OG dioxygenase domain is found at 208-307 (LLLQMKINYY…RISWAVFCEP (100 aa)). 2-oxoglutarate is bound at residue 215 to 217 (NYY). H232 is a Fe cation binding site. A substrate-binding site is contributed by T233. Fe cation-binding residues include D234 and H288. 298–300 (RIS) is a 2-oxoglutarate binding site. Positions 306 and 341 each coordinate substrate.

It belongs to the iron/ascorbate-dependent oxidoreductase family. L-ascorbate is required as a cofactor. Requires Fe(2+) as cofactor. Expressed in young seedlings (at protein level).

The catalysed reaction is a (2R,3S,4S)-leucoanthocyanidin + 2-oxoglutarate + O2 = a 4-H-anthocyanidin with a 3-hydroxy group + succinate + CO2 + 2 H2O. It catalyses the reaction (2R,3S,4S)-3,4-leucopelargonidin + 2-oxoglutarate + O2 = (4S)-2,3-dehydroleucopelargonidin + succinate + CO2 + H2O + H(+). It carries out the reaction (2R,3S,4S)-leucocyanidin + 2-oxoglutarate + O2 = (4S)-2,3-dehydroleucocyanidin + succinate + CO2 + H2O + H(+). Its pathway is pigment biosynthesis; anthocyanin biosynthesis. In terms of biological role, involved in anthocyanin and protoanthocyanidin biosynthesis by catalyzing the oxidation of leucoanthocyanidins into anthocyanidins. Possesses low flavonol synthase activity in vitro towards dihydrokaempferol and dihydroquercetin producing kaempferol and quercitin, respectively. This chain is Leucoanthocyanidin dioxygenase (LDOX), found in Arabidopsis thaliana (Mouse-ear cress).